Consider the following 503-residue polypeptide: UDP-N-acetylmuramoylalanine--D-glutamate ligase (503 aa).

129–135 (GTNGKTT) lines the ATP pocket.

Belongs to the MurCDEF family.

It is found in the cytoplasm. The enzyme catalyses UDP-N-acetyl-alpha-D-muramoyl-L-alanine + D-glutamate + ATP = UDP-N-acetyl-alpha-D-muramoyl-L-alanyl-D-glutamate + ADP + phosphate + H(+). The protein operates within cell wall biogenesis; peptidoglycan biosynthesis. Functionally, cell wall formation. Catalyzes the addition of glutamate to the nucleotide precursor UDP-N-acetylmuramoyl-L-alanine (UMA). The protein is UDP-N-acetylmuramoylalanine--D-glutamate ligase of Burkholderia multivorans (strain ATCC 17616 / 249).